The primary structure comprises 392 residues: Fasciculation and elongation protein zeta-1 (392 aa).

The segment at 1 to 36 (MEAPLVSLDEEFEDIRPSCTEEPEEKPQCLYGTSPH) is disordered. The residue at position 58 (Ser-58) is a Phosphoserine. Positions 175–196 (MQNSPDPEEEEEVLEEEDGGEI) are disordered. Positions 180–194 (DPEEEEEVLEEEDGG) are enriched in acidic residues. Positions 230–298 (SELTELLDRV…KKRRKEKGLS (69 aa)) form a coiled coil. 2 positions are modified to phosphoserine: Ser-298 and Ser-316.

It belongs to the zygin family. In terms of assembly, homodimer. Interacts with the NH2-terminal variable region (V1) of PKC zeta and weakly with that of PKC epsilon. Interacts with UBE4B and SAP30L. Interacts with SCOC and ULK1; SCOC interferes with ULK1-binding to FEZ1. Directly interacts with SCOC and UVRAG. Stabilizes the interaction between SCOC and UVRAG during amino acid starvation. Post-translationally, phosphorylated by protein kinase C zeta; which enhances interaction with UBE4B and polyubiquitination. In terms of processing, polyubiquitinated in a UBE4B-dependent manner; which does not lead to proteasomal degradation and may be important for neurogenic activity. Polyubiquitin linkage seems to be mainly through Lys-26.

The protein localises to the cytoplasm. Its subcellular location is the cytoskeleton. It localises to the microtubule organizing center. The protein resides in the centrosome. It is found in the cell membrane. In terms of biological role, may be involved in axonal outgrowth as component of the network of molecules that regulate cellular morphology and axon guidance machinery. May participate in the transport of mitochondria and other cargos along microtubules. This Mus musculus (Mouse) protein is Fasciculation and elongation protein zeta-1 (Fez1).